The sequence spans 137 residues: Large ribosomal subunit protein uL16c (137 aa).

It belongs to the universal ribosomal protein uL16 family. In terms of assembly, part of the 50S ribosomal subunit.

It is found in the plastid. The protein localises to the chloroplast. The protein is Large ribosomal subunit protein uL16c of Bigelowiella natans (Pedinomonas minutissima).